The sequence spans 434 residues: Arrestin domain-containing protein 1 (434 aa).

The interval 295–345 is disordered; the sequence is PGPGSSPGLLSPVVPSAPPQEEAEAVASGPHFSDPVSLSTKSHSQQQPLST. Residues 330 to 342 show a composition bias toward polar residues; the sequence is VSLSTKSHSQQQP. 2 short sequence motifs (PPxY motif) span residues 401 to 404 and 414 to 417; these read PPEY and PPSY.

It belongs to the arrestin family. As to quaternary structure, interacts (via PPxY motifs) with ITCH (via WW domains); the interaction is direct and participates in the recruitment of the ubiquitin-protein ligase ITCH to the NOTCH1 receptor. Interacts with ARRB1 and ARRB2; the interaction is direct. Interacts with TSG101; may recruit TSG101 to the plasma membrane. Interacts (via PPxY motifs) with WWP2 (via WW domains); ubiquitinates ARRDC1. Interacts with SLC11A2; controls the incorporation of SLC11A2 into extracellular vesicles through an ubiquitination-dependent mechanism. Interacts with WWP1 (via WW domains). Interacts with NEDD4 (via WW domains). Interacts with PDCD6IP. Post-translationally, ubiquitinated. Ubiquitination by WWP2; promotes localization to extracellular microvesicles. Ubiquitinated by WWP1.

Its subcellular location is the cell membrane. Functions as an adapter recruiting ubiquitin-protein ligases to their specific substrates. Through an ubiquitination-dependent mechanism plays for instance a role in the incorporation of SLC11A2 into extracellular vesicles. More generally, plays a role in the extracellular transport of proteins between cells through the release in the extracellular space of microvesicles. By participating in the ITCH-mediated ubiquitination and subsequent degradation of NOTCH1, negatively regulates the NOTCH signaling pathway. This Rattus norvegicus (Rat) protein is Arrestin domain-containing protein 1.